The chain runs to 444 residues: Deoxyguanosinetriphosphate triphosphohydrolase-like protein (444 aa).

The tract at residues 1 to 28 (MTDAVWNERRLGEDKQRRNDHRSPYQRD) is disordered. Residues 59–250 (RLTHSLEVSQ…MELADDIAYA (192 aa)) enclose the HD domain.

This sequence belongs to the dGTPase family. Type 2 subfamily.

The polypeptide is Deoxyguanosinetriphosphate triphosphohydrolase-like protein (Shewanella pealeana (strain ATCC 700345 / ANG-SQ1)).